We begin with the raw amino-acid sequence, 218 residues long: uncharacterized protein (218 aa).

Disordered stretches follow at residues Phe-30–Pro-71, Ser-93–Asp-120, and Met-133–Pro-209. Residues Pro-43–Pro-71 are compositionally biased toward low complexity. Positions Gly-94 to Gly-110 are enriched in gly residues. Over residues Pro-138–Cys-148 the composition is skewed to pro residues. Over residues Pro-156–Gly-171 the composition is skewed to gly residues. The span at Arg-191–Pro-209 shows a compositional bias: low complexity.

This is an uncharacterized protein from Homo sapiens (Human).